Here is a 296-residue protein sequence, read N- to C-terminus: NAD kinase (296 aa).

D72 serves as the catalytic Proton acceptor. NAD(+) is bound by residues D72–G73, N146–D147, R157, K174, D176, T187–S192, and Q247.

This sequence belongs to the NAD kinase family. The cofactor is a divalent metal cation.

It localises to the cytoplasm. The enzyme catalyses NAD(+) + ATP = ADP + NADP(+) + H(+). Its function is as follows. Involved in the regulation of the intracellular balance of NAD and NADP, and is a key enzyme in the biosynthesis of NADP. Catalyzes specifically the phosphorylation on 2'-hydroxyl of the adenosine moiety of NAD to yield NADP. The polypeptide is NAD kinase (Pseudomonas putida (strain ATCC 700007 / DSM 6899 / JCM 31910 / BCRC 17059 / LMG 24140 / F1)).